The primary structure comprises 380 residues: Succinyl-diaminopimelate desuccinylase (380 aa).

His68 lines the Zn(2+) pocket. Asp70 is an active-site residue. A Zn(2+)-binding site is contributed by Asp101. Residue Glu135 is the Proton acceptor of the active site. 3 residues coordinate Zn(2+): Glu136, Glu164, and His350.

This sequence belongs to the peptidase M20A family. DapE subfamily. Homodimer. Zn(2+) is required as a cofactor. The cofactor is Co(2+).

It catalyses the reaction N-succinyl-(2S,6S)-2,6-diaminopimelate + H2O = (2S,6S)-2,6-diaminopimelate + succinate. The protein operates within amino-acid biosynthesis; L-lysine biosynthesis via DAP pathway; LL-2,6-diaminopimelate from (S)-tetrahydrodipicolinate (succinylase route): step 3/3. Catalyzes the hydrolysis of N-succinyl-L,L-diaminopimelic acid (SDAP), forming succinate and LL-2,6-diaminopimelate (DAP), an intermediate involved in the bacterial biosynthesis of lysine and meso-diaminopimelic acid, an essential component of bacterial cell walls. This chain is Succinyl-diaminopimelate desuccinylase, found in Tolumonas auensis (strain DSM 9187 / NBRC 110442 / TA 4).